The chain runs to 115 residues: Urease subunit beta (115 aa).

Belongs to the urease beta subunit family. In terms of assembly, heterotrimer of UreA (gamma), UreB (beta) and UreC (alpha) subunits. Three heterotrimers associate to form the active enzyme.

It localises to the cytoplasm. The catalysed reaction is urea + 2 H2O + H(+) = hydrogencarbonate + 2 NH4(+). The protein operates within nitrogen metabolism; urea degradation; CO(2) and NH(3) from urea (urease route): step 1/1. The protein is Urease subunit beta of Arthrobacter sp. (strain FB24).